Reading from the N-terminus, the 252-residue chain is uncharacterized protein (252 aa).

This is an uncharacterized protein from Saccharolobus islandicus (Sulfolobus islandicus).